A 573-amino-acid polypeptide reads, in one-letter code: MVKSTMSAVLLVLHIFVLHLQYSEVQSLANTSSHDFSYLSFVYDATDPELEGSYDYIIVGGGTAGCPLAATLSANYSVLVLERGSLPTEYPNLLISDGFVYNLQQEDDGKTPVERFVSEDGIDNVRGRVLGGTSMINAGVYVRANTSFFNQTGIEWDMDLVNQTYEWVEDTIVFEPDSQTWQTVIGTAYLEAGILPNNGFSVDHLAGTRLTGSTFDNNGTRHASDELLNKGDPNNLRVAVQAAVEKIIFSSNTSGVTAIGVIYTDSNGTTHQAFVRGEGEVILSAGPIGSPQLLLLSGVGPESYLTSLNISVVASHPYVGQYIYDNPRNFINILPPNPIEASTVTVLGITSDFYQCSISSLPFDTPPFSFFPTTSYPLPNQTFAHIVNKVPGPLSHGTVTLNSSSDVRVGPNVKFNYYSNLTDLSHCVSGMKKLGEVLSTDALEPYKVEDLPGIDGFNILGIPLPENQTDDAAFETFCRESVASYWHYHGGCLVGKVLDDGFRVTGINALRVVDGSTFPSTPASHPQGFYLMLGRYMGIQILQERSASEDAIRNLGFQENILDSPKSTSSFAF.

Residues 1–27 (MVKSTMSAVLLVLHIFVLHLQYSEVQS) form the signal peptide. Asn30 carries N-linked (GlcNAc...) asparagine glycosylation. Residue 63–64 (TA) coordinates FAD. N-linked (GlcNAc...) asparagine glycosylation occurs at Asn75. FAD is bound by residues 82–83 (ER), Val129, Thr133, and 137–140 (NAGV). Residues Asn145, Asn150, Asn162, and Asn218 are each glycosylated (N-linked (GlcNAc...) asparagine). Val244 contributes to the FAD binding site. 3 N-linked (GlcNAc...) asparagine glycosylation sites follow: Asn252, Asn267, and Asn309. Cys356 is a binding site for substrate. N-linked (GlcNAc...) asparagine glycans are attached at residues Asn380, Asn402, Asn420, and Asn467. A disulfide bond links Cys427 and Cys478. Residue Tyr485 participates in substrate binding. FAD-binding positions include 486 to 487 (WH) and Gly515. His487 functions as the Proton donor in the catalytic mechanism. His525 (proton acceptor) is an active-site residue. 526–527 (PQ) contacts FAD.

The protein belongs to the GMC oxidoreductase family. Monomer. Requires FAD as cofactor.

It localises to the vacuole. It is found in the aleurone grain. It catalyses the reaction (R)-mandelonitrile = benzaldehyde + hydrogen cyanide. In terms of biological role, involved in cyanogenesis, the release of HCN from injured tissues. Catalyzes the stereospecific addition of HCN to a variety of aldehydes in vitro. It is a major seed constituent, and could have the additional role of a storage form for reduced nitrogen. The sequence is that of (R)-mandelonitrile lyase 3 (MDL3) from Prunus serotina (Black cherry).